A 513-amino-acid chain; its full sequence is Probable lipid II flippase MurJ (513 aa).

15 consecutive transmembrane segments (helical) span residues 3–23, 25–45, 83–103, 133–153, 162–182, 186–206, 221–241, 245–265, 271–291, 313–333, 354–374, 382–402, 405–425, 441–461, and 481–501; these read ILKS…LGFM, DLLI…FLAF, FISN…AFGI, IMFP…ILNA, YSSI…TAYF, ILSL…YQFP, ILNL…LGMS, VSII…ISWI, LVEF…LPLL, LVCI…ESLI, IEFY…LAGF, TPMK…IFFI, FQYT…FFLL, WLRF…LLFI, and LFYI…CLGL.

This sequence belongs to the MurJ/MviN family.

The protein resides in the cell inner membrane. It functions in the pathway cell wall biogenesis; peptidoglycan biosynthesis. Its function is as follows. Involved in peptidoglycan biosynthesis. Transports lipid-linked peptidoglycan precursors from the inner to the outer leaflet of the cytoplasmic membrane. In Buchnera aphidicola subsp. Baizongia pistaciae (strain Bp), this protein is Probable lipid II flippase MurJ.